The sequence spans 62 residues: Large ribosomal subunit protein uL30 (62 aa).

Belongs to the universal ribosomal protein uL30 family. In terms of assembly, part of the 50S ribosomal subunit.

In Geobacillus kaustophilus (strain HTA426), this protein is Large ribosomal subunit protein uL30.